A 264-amino-acid polypeptide reads, in one-letter code: Short-chain dehydrogenase/reductase ucsE (264 aa).

Residues 13 to 32 form a helical membrane-spanning segment; the sequence is LVVVVGGTSGLGFAVAQAAV. 3 residues coordinate NADP(+): Leu23, Ser43, and Asp74. The N-linked (GlcNAc...) asparagine glycan is linked to Asn125. The NADP(+) site is built by Arg130 and Lys139. The active-site Proton donor is the Ser157. Residues Val202 and Thr204 each contribute to the NADP(+) site.

The protein belongs to the short-chain dehydrogenases/reductases (SDR) family. The cofactor is NADP(+).

The protein resides in the membrane. Its pathway is mycotoxin biosynthesis. In terms of biological role, short-chain dehydrogenase/reductase; part of the gene cluster that mediates the biosynthesis of UCS1025A, a member of the pyrrolizidinone family that acts as a strong telomerase inhibitor and displays potent antibacterial and antitumor properties. These compounds share a hemiaminal-containing pyrrolizidinone core fused with a gamma-lactone, giving a furopyrrolizidine that is connected to a decalin fragment. The polyketide synthase module (PKS) of the PKS-NRPS ucsA is responsible for the synthesis of the polyketide backbone via the condensation of an acetyl-CoA starter unit with 6 malonyl-CoA units. The downstream nonribosomal peptide synthetase (NRPS) module then amidates the carboxyl end of the polyketide with a 2S,3S-methylproline derived from L-isoleucine by the 2-oxoglutarate-dependent dioxygenase ucsF which converts L-isoleucine to (4S,5S)-4-methylpyrroline-5-carboxylate that is further converted to 2S,3S-methylproline by the pyrroline-5-carboxylate reductase ucsG. Reductive release of the completed aminoacyl polyketide from the assembly line can form the 3-pyrrolin-2-one structure via an intramolecular Knoevenagel reaction. Because ucsA lacks a designated enoylreductase (ER) domain, the required activity is provided the enoyl reductase ucsL. This keto acyclic precursor is the substrate of the Diels-Alderase ucsH, that catalyzes the Diels-Alder cycloaddition. Oxidation of the 3S-methyl group to a carboxylate by the cytochrome P450 monooxygenase ucsK allows an oxa-Michael cyclization that might involve the reductase/dehydrogenase ucsI and which furnishes the furopyrrolizidine. The oxidase ucsJ likely plays a critical role in stereoselective reduction of the C5-C6 double bond to afford the required R-configured carboxylate group. Further enolization and oxidation at C5 by an unidentified enzyme affords the last intermediate that can undergo oxa-Michael cyclization to yield UCS1025A. The sequence is that of Short-chain dehydrogenase/reductase ucsE from Acremonium sp.